The following is a 234-amino-acid chain: Glucosamine-6-phosphate deaminase (234 aa).

Aspartate 63 acts as the Proton acceptor; for enolization step in catalysis. The For ring-opening step role is filled by asparagine 129. Catalysis depends on histidine 131, which acts as the Proton acceptor; for ring-opening step. Residue glutamate 136 is the For ring-opening step of the active site.

Belongs to the glucosamine/galactosamine-6-phosphate isomerase family. NagB subfamily.

It catalyses the reaction alpha-D-glucosamine 6-phosphate + H2O = beta-D-fructose 6-phosphate + NH4(+). The protein operates within amino-sugar metabolism; N-acetylneuraminate degradation; D-fructose 6-phosphate from N-acetylneuraminate: step 5/5. Its function is as follows. Catalyzes the reversible isomerization-deamination of glucosamine 6-phosphate (GlcN6P) to form fructose 6-phosphate (Fru6P) and ammonium ion. This chain is Glucosamine-6-phosphate deaminase, found in Listeria monocytogenes serotype 4a (strain HCC23).